The sequence spans 175 residues: MVSAWCSIALALLLALHEGKGQAAATLEQPASAPKGRGPHLRFRRCSCNSWLDKECVYFCHLDIIWVNTAGQTAPYGLGNPPRRRRRSLPKRCECSTAGDSACATFCHRRHWPEAVVAPSSQAPAAVLKTGKMWTAEGDLLRKLRDISATKLRFARLQPEVTRKAIPAYSRWRKR.

The signal sequence occupies residues 1–21 (MVSAWCSIALALLLALHEGKG). Positions 22–43 (QAAATLEQPASAPKGRGPHLRF) are excised as a propeptide. 2 disulfide bridges follow: Cys-46–Cys-60 and Cys-48–Cys-56. Positions 67-175 (VNTAGQTAPY…IPAYSRWRKR (109 aa)) are excised as a propeptide. Residues 93-108 (CECSTAGDSACATFCH) form an endothelin-like region.

It belongs to the endothelin/sarafotoxin family.

The protein localises to the secreted. Its function is as follows. Vasoconstrictor. The sequence is that of Endothelin-2 (Edn2) from Mus musculus (Mouse).